Here is a 462-residue protein sequence, read N- to C-terminus: Ubiquitin carboxyl-terminal hydrolase calypso (462 aa).

Residues 29 to 260 form the UCH catalytic domain; the sequence is GWLELESDPG…IRFNLMAVVP (232 aa). The active-site Nucleophile is Cys115. Residue His197 is the Proton donor of the active site. The ULD domain maps to 357 to 385; it reads NYDKFICTFLSMLAHQGVLGELVSQHLLP. The segment at 387-462 is positively charged C-terminal tail required for binding nucleosomes; it reads KKIANRLNRQ…KGRNKCRKRK (76 aa). Residues 413–447 show a composition bias toward low complexity; sequence GTNAAGSKSQQQQQQTQQQPQQTQTAKNGKSPGKT. Positions 413–462 are disordered; that stretch reads GTNAAGSKSQQQQQQTQQQPQQTQTAKNGKSPGKTPGRRRKGRNKCRKRK. The span at 448–462 shows a compositional bias: basic residues; that stretch reads PGRRRKGRNKCRKRK.

Belongs to the peptidase C12 family. BAP1 subfamily. In terms of assembly, catalytic component of the polycomb repressive deubiquitinase (PR-DUB) complex, at least composed of caly/calypso, Asx and sba (MBD5/6 homolog). The PR-DUB complex associates with nucleosomes to mediate deubiquitination of histone H2AK118ub1 substrates; the association requires the positively charged C-terminal tail of caly, probably due to direct binding of DNA. Interacts (via ULD domain) with Asx (via DEUBAD domain); the interaction produces a stable heterodimer with a composite binding site for ubiquitin. Homodimerizes (via coiled-coil hinge-region between the UCH and ULD domains) to mediate assembly of 2 copies of the caly-Asx heterodimer into a bisymmetric tetramer; dimerization enhances PR-DUB association with nucleosomes.

The protein resides in the nucleus. The enzyme catalyses Thiol-dependent hydrolysis of ester, thioester, amide, peptide and isopeptide bonds formed by the C-terminal Gly of ubiquitin (a 76-residue protein attached to proteins as an intracellular targeting signal).. Functionally, catalytic component of the polycomb repressive deubiquitinase (PR-DUB) complex, a complex that specifically mediates deubiquitination of histone H2A monoubiquitinated at 'Lys-119' (H2AK118ub1). Mediates bisymmetric organization of the PR-DUB complex and is involved in association with nucleosomes to mediate deubiquitination. Does not deubiquitinate monoubiquitinated histone H2B. Required to maintain the transcriptionally repressive state of homeotic genes throughout development. The PR-DUB complex has weak or no activity toward 'Lys-48'- and 'Lys-63'-linked polyubiquitin chains. Polycomb group (PcG) protein. The chain is Ubiquitin carboxyl-terminal hydrolase calypso from Drosophila grimshawi (Hawaiian fruit fly).